The primary structure comprises 280 residues: MVRLPLQCLLWGCLLTPVHPEQATACKGNQYLSGSHCCDLCPPGKKLVNDCTGITETECSPCGAGEFLDTWNRESRCHQHKYCDPNLGLQVQGTGTSTTDATCICHEGQHCSSDACESCILHSPCAPGLGVKQLATGVSDTVCEPCPVGFFSKVSSALEKCHPWTSCDTKGLVELQAGTNKTDAVCGFRNRMRALVVIPITMGVLFAVLLLSACIRKVAKEPENKALHRKVGWQDPVETVYPDDFPGPHSIAPVQETLHGCQPVTQEDGKESRISVQERQ.

The signal sequence occupies residues 1-20 (MVRLPLQCLLWGCLLTPVHP). The Extracellular portion of the chain corresponds to 21 to 194 (EQATACKGNQ…VCGFRNRMRA (174 aa)). TNFR-Cys repeat units lie at residues 25–60 (ACKGNQYLSGSHCCDLCPPGKKLVNDCTGITETECS), 61–103 (PCGA…DATC), 104–144 (ICHE…TVCE), and 145–187 (PCPV…AVCG). 8 disulfides stabilise this stretch: Cys-26-Cys-37, Cys-38-Cys-51, Cys-41-Cys-59, Cys-62-Cys-77, Cys-83-Cys-103, Cys-105-Cys-119, Cys-111-Cys-116, and Cys-125-Cys-143. Asn-180 is a glycosylation site (N-linked (GlcNAc...) asparagine). The helical transmembrane segment at 195 to 215 (LVVIPITMGVLFAVLLLSACI) threads the bilayer. The Cytoplasmic segment spans residues 216–280 (RKVAKEPENK…ESRISVQERQ (65 aa)).

In terms of assembly, monomer and homodimer. Interacts with TRAF1, TRAF2, TRAF3, TRAF5 and TRAF6. Interacts with TRAF6 and MAP3K8; the interaction is required for ERK activation.

The protein resides in the membrane. In terms of biological role, receptor for TNFSF5/CD40LG. Transduces TRAF6- and MAP3K8-mediated signals that activate ERK in macrophages and B cells, leading to induction of immunoglobulin secretion. This Equus caballus (Horse) protein is Tumor necrosis factor receptor superfamily member 5 (CD40).